We begin with the raw amino-acid sequence, 270 residues long: Sorting nexin-11 (270 aa).

The 117-residue stretch at 16–132 (VITVRVQDPR…HLFLQSQLSV (117 aa)) folds into the PX domain. The a 1,2-diacyl-sn-glycero-3-phospho-(1D-myo-inositol-3-phosphate) site is built by Arg-59, Lys-85, and Arg-99. The important for membrane trafficking stretch occupies residues 135–139 (IEACV). Residues 168-177 (GSSHLAEGDQ) show a composition bias toward basic and acidic residues. Disordered regions lie at residues 168-244 (GSSH…LSAS) and 251-270 (LGGGHAVPLDPGQLETVLEK). The segment covering 218 to 227 (LESPTLPPTS) has biased composition (pro residues).

It belongs to the sorting nexin family. Monomer. Interacts with TRPV3; this interaction promotes TRPV3 trafficking from the cell membrane to lysosome for degradation.

The protein resides in the cell membrane. It localises to the endosome. Its subcellular location is the cytoplasm. Functionally, phosphoinositide-binding protein involved in protein sorting and membrane trafficking in endosomes. Regulates the levels of TRPV3 by promoting its trafficking from the cell membrane to lysosome for degradation. The chain is Sorting nexin-11 (SNX11) from Bos taurus (Bovine).